Consider the following 304-residue polypeptide: Coenzyme PQQ synthesis protein B (304 aa).

Belongs to the PqqB family.

It participates in cofactor biosynthesis; pyrroloquinoline quinone biosynthesis. Functionally, may be involved in the transport of PQQ or its precursor to the periplasm. This is Coenzyme PQQ synthesis protein B from Pseudomonas aeruginosa (strain ATCC 15692 / DSM 22644 / CIP 104116 / JCM 14847 / LMG 12228 / 1C / PRS 101 / PAO1).